The sequence spans 185 residues: Homeobox-leucine zipper protein ATHB-22 (185 aa).

A DNA-binding region (homeobox) is located at residues 76 to 135 (TSEQLKFLERSFQEEIKLNPDRKMKLNPDRKMKLSKELGLQPRQIAVWFQNRKARWKNKQ). Residues 136–164 (LEHLYESLRQEFDIVSREKELLQEELIQL) are leucine-zipper.

The protein belongs to the HD-ZIP homeobox family. Class I subfamily. As to expression, expressed in siliques.

It is found in the nucleus. Probable transcription factor. The protein is Homeobox-leucine zipper protein ATHB-22 (ATHB-22) of Arabidopsis thaliana (Mouse-ear cress).